We begin with the raw amino-acid sequence, 240 residues long: Small ribosomal subunit protein uS3m (240 aa).

This sequence belongs to the universal ribosomal protein uS3 family.

Its subcellular location is the mitochondrion. In Chondrus crispus (Carrageen Irish moss), this protein is Small ribosomal subunit protein uS3m (RPS3).